The chain runs to 570 residues: Formate--tetrahydrofolate ligase (570 aa).

Thr65 to Thr72 lines the ATP pocket.

The protein belongs to the formate--tetrahydrofolate ligase family.

The enzyme catalyses (6S)-5,6,7,8-tetrahydrofolate + formate + ATP = (6R)-10-formyltetrahydrofolate + ADP + phosphate. Its pathway is one-carbon metabolism; tetrahydrofolate interconversion. In Shewanella putrefaciens (strain CN-32 / ATCC BAA-453), this protein is Formate--tetrahydrofolate ligase.